A 185-amino-acid polypeptide reads, in one-letter code: MVNDVLREAESRMKKATEALRNHLATIRTGRASPALVEHLHVEAYGATLPLNQLATITVPEPRMLVIQPFDANTVKAISKAIMNSELGITPTDDGRLIRLAIPQLTEARRKELTKLVRARVEESKVALRNIRREALEDLRDLEHEKMISEDEHRRAQEKLQELTDRYVRELDHIGATKEAEVMEI.

The protein belongs to the RRF family.

The protein localises to the cytoplasm. Responsible for the release of ribosomes from messenger RNA at the termination of protein biosynthesis. May increase the efficiency of translation by recycling ribosomes from one round of translation to another. The chain is Ribosome-recycling factor from Roseiflexus castenholzii (strain DSM 13941 / HLO8).